We begin with the raw amino-acid sequence, 474 residues long: Ribosomal RNA small subunit methyltransferase F (474 aa).

Residues 119–125 (AAAPGSK), glutamate 143, aspartate 170, and aspartate 188 each bind S-adenosyl-L-methionine. Cysteine 241 serves as the catalytic Nucleophile.

This sequence belongs to the class I-like SAM-binding methyltransferase superfamily. RsmB/NOP family.

It is found in the cytoplasm. The enzyme catalyses cytidine(1407) in 16S rRNA + S-adenosyl-L-methionine = 5-methylcytidine(1407) in 16S rRNA + S-adenosyl-L-homocysteine + H(+). Specifically methylates the cytosine at position 1407 (m5C1407) of 16S rRNA. The chain is Ribosomal RNA small subunit methyltransferase F from Shewanella oneidensis (strain ATCC 700550 / JCM 31522 / CIP 106686 / LMG 19005 / NCIMB 14063 / MR-1).